A 194-amino-acid chain; its full sequence is Cation channel sperm-associated auxiliary subunit zeta (194 aa).

As to quaternary structure, component of the CatSper complex or CatSpermasome composed of the core pore-forming members CATSPER1, CATSPER2, CATSPER3 and CATSPER4 as well as auxiliary members CATSPERB, CATSPERG2, CATSPERD, CATSPERE, CATSPERZ, C2CD6/CATSPERT, SLCO6C1, TMEM249, TMEM262 and EFCAB9. HSPA1 may be an additional auxiliary complex member. The core complex members CATSPER1, CATSPER2, CATSPER3 and CATSPER4 form a heterotetrameric channel. The auxiliary CATSPERB, CATSPERG2, CATSPERD and CATSPERE subunits form a pavilion-like structure over the pore which stabilizes the complex through interactions with CATSPER4, CATSPER3, CATSPER1 and CATSPER2 respectively. SLCO6C1 interacts with CATSPERE and TMEM262/CATSPERH interacts with CATSPERB, further stabilizing the complex. C2CD6/CATSPERT interacts at least with CATSPERD and is required for targeting the CatSper complex in the flagellar membrane. Interacts with EFCAB9; the interaction is direct, Ca(2+)-dependent and connects EFCAB9 with the CatSper complex. Dissociates from EFCAB9 at elevated pH. Testis-specific. Expressed in adult but not in fetal testis. Not expressed in ovary. Within testis, expression is restricted to spermatids.

It localises to the cell projection. The protein localises to the cilium. It is found in the flagellum membrane. Its function is as follows. Auxiliary component of the CatSper complex, a complex involved in sperm cell hyperactivation. Sperm cell hyperactivation is needed for sperm motility which is essential late in the preparation of sperm for fertilization. Required for a distribution of the CatSper complex in linear quadrilateral nanodomains along the flagellum, maximizing fertilization inside the mammalian female reproductive tract. Together with EFCAB9, associates with the CatSper channel pore and is required for the two-row structure of each single CatSper channel. The polypeptide is Cation channel sperm-associated auxiliary subunit zeta (Mus musculus (Mouse)).